The primary structure comprises 198 residues: Ribonuclease HII (198 aa).

The RNase H type-2 domain occupies 10-198 (QLVAGVDEVG…PVKRALGLAS (189 aa)). Positions 16, 17, and 108 each coordinate a divalent metal cation.

It belongs to the RNase HII family. It depends on Mn(2+) as a cofactor. Mg(2+) is required as a cofactor.

The protein localises to the cytoplasm. The catalysed reaction is Endonucleolytic cleavage to 5'-phosphomonoester.. Endonuclease that specifically degrades the RNA of RNA-DNA hybrids. This chain is Ribonuclease HII, found in Escherichia coli O6:H1 (strain CFT073 / ATCC 700928 / UPEC).